Consider the following 375-residue polypeptide: Coproporphyrin III ferrochelatase (375 aa).

The Fe-coproporphyrin III site is built by Ser59 and Tyr128. 2 residues coordinate Fe(2+): His191 and Glu286.

This sequence belongs to the ferrochelatase family.

The protein localises to the cytoplasm. The catalysed reaction is Fe-coproporphyrin III + 2 H(+) = coproporphyrin III + Fe(2+). The protein operates within porphyrin-containing compound metabolism; protoheme biosynthesis. Functionally, involved in coproporphyrin-dependent heme b biosynthesis. Catalyzes the insertion of ferrous iron into coproporphyrin III to form Fe-coproporphyrin III. This chain is Coproporphyrin III ferrochelatase, found in Streptomyces griseus subsp. griseus (strain JCM 4626 / CBS 651.72 / NBRC 13350 / KCC S-0626 / ISP 5235).